Reading from the N-terminus, the 561-residue chain is Guanine nucleotide-binding protein-like 3 (561 aa).

Residues 28–46 show a composition bias toward basic residues; that stretch reads HNRKLKKAAKKQGISRKAK. 2 disordered regions span residues 28 to 58 and 76 to 110; these read HNRKLKKAAKKQGISRKAKKDIGVPNSAPFK and KEQNKIVKQQEKAAKRKKEKDAASSVKEPAAKKAK. Residues 53–98 adopt a coiled-coil conformation; the sequence is NSAPFKEEVLREAEQRKQELETLKEQNKIVKQQEKAAKRKKEKDAA. The segment covering 76 to 88 has biased composition (basic and acidic residues); it reads KEQNKIVKQQEKA. A CP-type G domain is found at 133–319; the sequence is CQELNKVIEA…MIDSPGILAA (187 aa). GTP-binding positions include 181 to 184, 268 to 275, and 312 to 315; these read NKID, GFPNVGKS, and DSPG. The segment at 486-532 is disordered; that stretch reads ATTTDAEEEKMDTTTNTDEPEAESHISSTVEPIQEPTEKRKDKPAKE. Residues 521–532 show a composition bias toward basic and acidic residues; that stretch reads PTEKRKDKPAKE.

It belongs to the TRAFAC class YlqF/YawG GTPase family.

The protein localises to the nucleus. Its subcellular location is the nucleolus. May play a role in regulating cellular proliferation. This Danio rerio (Zebrafish) protein is Guanine nucleotide-binding protein-like 3 (gnl3).